Consider the following 466-residue polypeptide: Ribulose bisphosphate carboxylase large chain (466 aa).

The residue at position 5 (lysine 5) is an N6,N6,N6-trimethyllysine. Substrate-binding residues include asparagine 114 and threonine 164. Lysine 166 (proton acceptor) is an active-site residue. Position 168 (lysine 168) interacts with substrate. Lysine 192, aspartate 194, and glutamate 195 together coordinate Mg(2+). Lysine 192 bears the N6-carboxylysine mark. The active-site Proton acceptor is histidine 285. Arginine 286, histidine 318, and serine 370 together coordinate substrate.

It belongs to the RuBisCO large chain family. Type I subfamily. Heterohexadecamer of 8 large chains and 8 small chains. Requires Mg(2+) as cofactor.

The protein resides in the plastid. It localises to the chloroplast. It carries out the reaction 2 (2R)-3-phosphoglycerate + 2 H(+) = D-ribulose 1,5-bisphosphate + CO2 + H2O. The enzyme catalyses D-ribulose 1,5-bisphosphate + O2 = 2-phosphoglycolate + (2R)-3-phosphoglycerate + 2 H(+). RuBisCO catalyzes two reactions: the carboxylation of D-ribulose 1,5-bisphosphate, the primary event in carbon dioxide fixation, as well as the oxidative fragmentation of the pentose substrate in the photorespiration process. Both reactions occur simultaneously and in competition at the same active site. In Lobelia sp, this protein is Ribulose bisphosphate carboxylase large chain.